Reading from the N-terminus, the 689-residue chain is Glycine--tRNA ligase beta subunit (689 aa).

This sequence belongs to the class-II aminoacyl-tRNA synthetase family. As to quaternary structure, tetramer of two alpha and two beta subunits.

The protein localises to the cytoplasm. The enzyme catalyses tRNA(Gly) + glycine + ATP = glycyl-tRNA(Gly) + AMP + diphosphate. The protein is Glycine--tRNA ligase beta subunit of Shewanella halifaxensis (strain HAW-EB4).